We begin with the raw amino-acid sequence, 671 residues long: MERLSQMAGRRAWCAEDSVPRQEEEDRTRPSKTVTFKDVAVDLTQEEWQQMKPAQRALYRDVMLETYSNLVTVGCQVTKPDVIFKLEQAEEPWVLEEEMFWRRSPEAARGRMKSFAFKDMAKDLRFEDVVIYFSLEEWECLRHSHRNLYRAVMLDNYSNLLSLSLADTKPRVVSLLEQGKEPWMVMRNETKIWHPDWVSRTEAKDSSKIKTLQEKMAKKHTCPTLEDSKTRGDREVTRELEGQQVHQEGHLRQAAVTSVERPDSVQCTAHREAHPGGKPCSSEKSQKTSLCQPPPIEREQLHSKAKASEHAQHGKVFNSCTSDTAVHPRPQESRKDSERKKSALAGGPDTSKPQSAQGSERPHKCKECGKAFHTPSQLSHHQKLHVGEKPYKCQECGKAFPSNAQLSLHHRVHTDEKCFECKECGKAFMRPSHLLRHQRIHTGEKPHKCKECGKAFRYDTQLSLHLLTHAGARRFECKDCDKVYSCASQLALHQMSHTGEKPHKCKECGKGFISDSHLLRHQSVHTGETPYKCKECGKGFRRGSELARHQRAHSGDKPYKCKECGKSFTCTTELFRHQKVHTGDRPHKCKECGKAFIRRSELTHHERSHSGEKPYECKECGKTFGRGSELSRHQKIHTGEKPYKCQQCGKAFIRGSHLTQHQRIHTGRRSE.

A disordered region spans residues 1–31; sequence MERLSQMAGRRAWCAEDSVPRQEEEDRTRPS. The segment covering 18–29 has biased composition (basic and acidic residues); sequence SVPRQEEEDRTR. KRAB domains lie at 34-105 and 124-195; these read VTFK…RRSP and LRFE…IWHP. Positions 214-366 are disordered; the sequence is EKMAKKHTCP…QGSERPHKCK (153 aa). 3 stretches are compositionally biased toward basic and acidic residues: residues 226–251, 296–312, and 329–341; these read EDSKTRGDREVTRELEGQQVHQEGHL, IEREQLHSKAKASEHAQ, and RPQESRKDSERKK. 11 consecutive C2H2-type zinc fingers follow at residues 363 to 385, 391 to 413, 419 to 441, 447 to 469, 475 to 497, 503 to 525, 531 to 553, 559 to 581, 587 to 609, 615 to 637, and 643 to 665; these read HKCKECGKAFHTPSQLSHHQKLH, YKCQECGKAFPSNAQLSLHHRVH, FECKECGKAFMRPSHLLRHQRIH, HKCKECGKAFRYDTQLSLHLLTH, FECKDCDKVYSCASQLALHQMSH, HKCKECGKGFISDSHLLRHQSVH, YKCKECGKGFRRGSELARHQRAH, YKCKECGKSFTCTTELFRHQKVH, HKCKECGKAFIRRSELTHHERSH, YECKECGKTFGRGSELSRHQKIH, and YKCQQCGKAFIRGSHLTQHQRIH.

This sequence belongs to the krueppel C2H2-type zinc-finger protein family. In terms of assembly, interacts with TRIM28. Little or no expression detected in most adult tissues (brain, liver, kidney, spleen, testis, ovary). In the hippocampus, detected in neural stem cells within the subventricular zone and subgranular zone.

The protein localises to the nucleus. In terms of biological role, has transcriptional repression activity, partially through the recruitment of the corepressor TRIM28 but also has repression activity independently of this interaction. Essential during embryonic development, where it acts as direct repressor of IGF2-P0, placental-specific transcript of IGF2, in early development and regulates convergent extension movements required for axis elongation and tissue morphogenesis in all germ layers. Also important for normal morphogenesis of extraembryonic tissues including the yolk sac, extraembryonic mesoderm and placenta. May enhance proliferation or maintenance of neural stem cells. This is Zinc finger protein 568 from Mus musculus (Mouse).